Reading from the N-terminus, the 133-residue chain is Profilin (133 aa).

The protein belongs to the profilin family.

Functionally, more likely to influence phosphoinositide metabolism than actin assembly. This chain is Profilin, found in Vaccinia virus (strain Tian Tan) (VACV).